The chain runs to 777 residues: Rho-GTPase-activating protein 8 (777 aa).

Positions serine 3–aspartate 420 constitute an F-BAR domain. The stretch at glutamine 117–isoleucine 172 forms a coiled coil. Positions valine 213–glycine 296 constitute a DEP domain. Residues valine 454–phenylalanine 650 form the Rho-GAP domain. The segment at leucine 667–serine 709 is disordered. Polar residues predominate over residues tyrosine 668–serine 692. Residues serine 676 and serine 680 each carry the phosphoserine modification. Position 682 is a phosphothreonine (threonine 682). Serine 686 is subject to Phosphoserine. Position 694 is a phosphothreonine (threonine 694). Residue serine 698 is modified to Phosphoserine.

As to quaternary structure, interacts with pak1/shk1. Phosphorylated by pak1/shk1.

The protein localises to the cytoplasm. In terms of biological role, acts in signal transduction. Negatively regulates the pak1/shk1 control pathway. This is Rho-GTPase-activating protein 8 (rga8) from Schizosaccharomyces pombe (strain 972 / ATCC 24843) (Fission yeast).